The primary structure comprises 323 residues: Transaldolase (323 aa).

Catalysis depends on Lys133, which acts as the Schiff-base intermediate with substrate.

It belongs to the transaldolase family. Type 1 subfamily. As to quaternary structure, monomer.

It catalyses the reaction D-sedoheptulose 7-phosphate + D-glyceraldehyde 3-phosphate = D-erythrose 4-phosphate + beta-D-fructose 6-phosphate. The protein operates within carbohydrate degradation; pentose phosphate pathway; D-glyceraldehyde 3-phosphate and beta-D-fructose 6-phosphate from D-ribose 5-phosphate and D-xylulose 5-phosphate (non-oxidative stage): step 2/3. Its function is as follows. Transaldolase important for the balance of metabolites in the pentose-phosphate pathway. Involved in xylose fermentation to ethanol. The protein is Transaldolase of Fusarium oxysporum f. sp. lycopersici (strain 4287 / CBS 123668 / FGSC 9935 / NRRL 34936) (Fusarium vascular wilt of tomato).